We begin with the raw amino-acid sequence, 246 residues long: NH(3)-dependent NAD(+) synthetase (246 aa).

29–36 (GLSGGIDS) serves as a coordination point for ATP. Aspartate 35 serves as a coordination point for Mg(2+). Arginine 110 is a deamido-NAD(+) binding site. ATP is bound at residue threonine 130. Glutamate 135 provides a ligand contact to Mg(2+). Positions 159 and 181 each coordinate ATP.

Belongs to the NAD synthetase family. As to quaternary structure, homodimer.

The catalysed reaction is deamido-NAD(+) + NH4(+) + ATP = AMP + diphosphate + NAD(+) + H(+). It functions in the pathway cofactor biosynthesis; NAD(+) biosynthesis; NAD(+) from deamido-NAD(+) (ammonia route): step 1/1. Functionally, catalyzes the ATP-dependent amidation of deamido-NAD to form NAD. Uses ammonia as a nitrogen source. This Campylobacter jejuni subsp. jejuni serotype O:6 (strain 81116 / NCTC 11828) protein is NH(3)-dependent NAD(+) synthetase.